The following is a 201-amino-acid chain: Glycerol-3-phosphate acyltransferase (201 aa).

Transmembrane regions (helical) follow at residues 10 to 30, 60 to 80, 86 to 106, 116 to 136, 139 to 159, and 166 to 186; these read MLIG…GLIL, LAAA…LIAA, AAIA…WIGF, LGVL…AWIV, LLTR…PIAL, and ALAA…RANI.

Belongs to the PlsY family. In terms of assembly, probably interacts with PlsX.

The protein localises to the cell inner membrane. The catalysed reaction is an acyl phosphate + sn-glycerol 3-phosphate = a 1-acyl-sn-glycero-3-phosphate + phosphate. Its pathway is lipid metabolism; phospholipid metabolism. Its function is as follows. Catalyzes the transfer of an acyl group from acyl-phosphate (acyl-PO(4)) to glycerol-3-phosphate (G3P) to form lysophosphatidic acid (LPA). This enzyme utilizes acyl-phosphate as fatty acyl donor, but not acyl-CoA or acyl-ACP. The protein is Glycerol-3-phosphate acyltransferase of Brucella suis (strain ATCC 23445 / NCTC 10510).